The following is a 397-amino-acid chain: Argininosuccinate synthase (397 aa).

Leu7 to Ser15 is a binding site for ATP. L-citrulline is bound at residue Tyr83. ATP is bound at residue Gly113. L-aspartate-binding residues include Thr115, Asn119, and Asp120. Position 119 (Asn119) interacts with L-citrulline. The L-citrulline site is built by Arg123, Ser169, Ser178, Glu253, and Tyr265.

It belongs to the argininosuccinate synthase family. Type 1 subfamily. As to quaternary structure, homotetramer.

The protein localises to the cytoplasm. It catalyses the reaction L-citrulline + L-aspartate + ATP = 2-(N(omega)-L-arginino)succinate + AMP + diphosphate + H(+). Its pathway is amino-acid biosynthesis; L-arginine biosynthesis; L-arginine from L-ornithine and carbamoyl phosphate: step 2/3. In Thermoplasma volcanium (strain ATCC 51530 / DSM 4299 / JCM 9571 / NBRC 15438 / GSS1), this protein is Argininosuccinate synthase.